Here is a 1015-residue protein sequence, read N- to C-terminus: Tolloid-like protein 2 (1015 aa).

The first 25 residues, 1-25 (MPRATALGALVSLLLLLPLPRGAGG), serve as a signal peptide directing secretion. 2 disordered regions span residues 24-49 (GGLGERPDATADYSELDGEEGTEQQL) and 88-130 (VGAT…TTLL). Residues 26–149 (LGERPDATAD…AKTFSPRVRR (124 aa)) constitute a propeptide that is removed on maturation. A compositionally biased stretch (polar residues) spans 103–113 (SESSPDTTAMD). Basic and acidic residues predominate over residues 115-125 (GTKEAGKDGRE). One can recognise a Peptidase M12A domain in the interval 149–349 (RATTSRTERI…AQARKLYKCP (201 aa)). N171 is a glycosylation site (N-linked (GlcNAc...) asparagine). Intrachain disulfides connect C192-C348, C212-C234, C214-C215, and C351-C377. Residue H242 participates in Zn(2+) binding. E243 is an active-site residue. The Zn(2+) site is built by H246 and H252. CUB domains are found at residues 351-463 (CGET…YEAT) and 464-576 (CGGD…FFKE). N361 and N392 each carry an N-linked (GlcNAc...) asparagine glycan. 12 cysteine pairs are disulfide-bonded: C404–C426, C464–C490, C517–C539, C580–C592, C588–C601, C603–C616, C620–C646, C673–C695, C736–C747, C743–C756, C758–C771, and C776–C802. An EGF-like 1; calcium-binding domain is found at 576–617 (EVDECSWPDHGGCEHRCVNTLGSYKCACDPGYELAADKKMCE). The CUB 3 domain occupies 620–732 (CGGFITKLNG…RGFRAHFFSD (113 aa)). N-linked (GlcNAc...) asparagine glycosylation occurs at N628. Residues 732–772 (DKDECAKDNGGCQHECVNTFGSYLCRCRNGYWLHENGHDCK) form the EGF-like 2; calcium-binding domain. CUB domains are found at residues 776 to 888 (CAHK…HSTE) and 889 to 1005 (CGGR…YTST). The N-linked (GlcNAc...) asparagine glycan is linked to N805. 3 disulfides stabilise this stretch: C829–C851, C889–C919, and C946–C968. Residues R963 and R966 each carry the omega-N-methylarginine modification.

It depends on Zn(2+) as a cofactor.

Its subcellular location is the secreted. Functionally, protease which specifically processes pro-lysyl oxidase. Required for the embryonic development. Predominant protease, which in the development, influences dorsal-ventral patterning and skeletogenesis. This Homo sapiens (Human) protein is Tolloid-like protein 2 (TLL2).